The primary structure comprises 160 residues: SsrA-binding protein (160 aa).

It belongs to the SmpB family.

Its subcellular location is the cytoplasm. Functionally, required for rescue of stalled ribosomes mediated by trans-translation. Binds to transfer-messenger RNA (tmRNA), required for stable association of tmRNA with ribosomes. tmRNA and SmpB together mimic tRNA shape, replacing the anticodon stem-loop with SmpB. tmRNA is encoded by the ssrA gene; the 2 termini fold to resemble tRNA(Ala) and it encodes a 'tag peptide', a short internal open reading frame. During trans-translation Ala-aminoacylated tmRNA acts like a tRNA, entering the A-site of stalled ribosomes, displacing the stalled mRNA. The ribosome then switches to translate the ORF on the tmRNA; the nascent peptide is terminated with the 'tag peptide' encoded by the tmRNA and targeted for degradation. The ribosome is freed to recommence translation, which seems to be the essential function of trans-translation. The polypeptide is SsrA-binding protein (Yersinia pseudotuberculosis serotype O:1b (strain IP 31758)).